A 130-amino-acid chain; its full sequence is Ornithine decarboxylase antizyme (130 aa).

Over residues 1–14 the composition is skewed to basic and acidic residues; sequence SDVPVHHRTDHDRA. Residues 1-56 form a disordered region; that stretch reads SDVPVHHRTDHDRASLLTGSSRKSSVDSAGGSLFEASSRASSPSSSSSSECSDTES. The span at 17-27 shows a compositional bias: polar residues; that stretch reads LTGSSRKSSVD. Over residues 32–51 the composition is skewed to low complexity; it reads SLFEASSRASSPSSSSSSEC.

Belongs to the ODC antizyme family. As to quaternary structure, interacts with ODC1 and thereby sterically blocks ODC homodimerization.

Functionally, ornithine decarboxylase (ODC) antizyme protein that negatively regulates ODC activity and intracellular polyamine biosynthesis and uptake in response to increased intracellular polyamine levels. Binds to ODC monomers, inhibiting the assembly of the functional ODC homodimer, and targets the monomers for ubiquitin-independent proteolytic destruction by the 26S proteasome. This Drosophila virilis (Fruit fly) protein is Ornithine decarboxylase antizyme (Oda).